A 341-amino-acid polypeptide reads, in one-letter code: Tetraacyldisaccharide 4'-kinase (341 aa).

54-61 (TVGGAGKT) is a binding site for ATP.

The protein belongs to the LpxK family.

It catalyses the reaction a lipid A disaccharide + ATP = a lipid IVA + ADP + H(+). It participates in glycolipid biosynthesis; lipid IV(A) biosynthesis; lipid IV(A) from (3R)-3-hydroxytetradecanoyl-[acyl-carrier-protein] and UDP-N-acetyl-alpha-D-glucosamine: step 6/6. Transfers the gamma-phosphate of ATP to the 4'-position of a tetraacyldisaccharide 1-phosphate intermediate (termed DS-1-P) to form tetraacyldisaccharide 1,4'-bis-phosphate (lipid IVA). In Brucella melitensis biotype 2 (strain ATCC 23457), this protein is Tetraacyldisaccharide 4'-kinase.